A 215-amino-acid chain; its full sequence is Tricarboxylate transporter ALT9 (215 aa).

Solcar repeat units lie at residues 18–106 (TTVV…LAPM) and 111–197 (CGVS…VVRL). 3 consecutive transmembrane segments (helical) span residues 19 to 39 (TVVG…VLVL), 112 to 132 (GVST…YCTM), and 182 to 202 (VAGA…GFLV).

It belongs to the mitochondrial carrier (TC 2.A.29) family.

The protein resides in the mitochondrion inner membrane. It functions in the pathway mycotoxin biosynthesis. Tricarboxylate transporter; part of the gene cluster that mediates the biosynthesis of the host-selective toxins (HSTs) AAL-toxins, sphinganine-analog mycotoxins responsible for Alternaria stem canker on tomato by the tomato pathotype. The biosynthesis starts with the polyketide synthase ALT1-catalyzed C-16 carbon chain assembly from one starter acetyl-CoA unit with malonyl-CoA extender units. ALT1 also selectively transfers methyl groups at the first and the third cycle of chain elongation for AAL toxin. The C-16 polyketide chain is released from the enzyme by a nucleophilic attack of a carbanion, which is derived from R-carbon of glycin by decarboxylation, on the carbonyl carbon of polyketide acyl chain. This step is probably catalyzed by a pyridoxal 5'-phosphate-dependent aminoacyl transferase ALT4. The respective functions of the other enzymes encoded by the cluster have still to be elucidated. The sphingosine N-acyltransferase-like protein ALT7 seems not to act as a resistance/self-tolerance factor against the toxin in the toxin biosynthetic gene cluster, contrary to what is expected. The protein is Tricarboxylate transporter ALT9 of Alternaria alternata (Alternaria rot fungus).